The following is a 206-amino-acid chain: Sclerostin domain-containing protein 1 (206 aa).

The signal sequence occupies residues 1-22 (MLLSAIHFYGLLLACTFTRSYS). Residues 40-68 (APASPSSNSTLNQARNGGRHYAGTGSDRN) are disordered. Residues 43–54 (SPSSNSTLNQAR) show a composition bias toward polar residues. N-linked (GlcNAc...) asparagine glycosylation is present at Asn-47. Intrachain disulfides connect Cys-75/Cys-133, Cys-89/Cys-147, Cys-100/Cys-163, and Cys-104/Cys-165. Residues 75 to 170 (CRELRSTKYI…TACKCKRYTR (96 aa)) enclose the CTCK domain. The N-linked (GlcNAc...) asparagine glycan is linked to Asn-173. Residues 176–206 (SHNFEGTSQAKPVQHHKERKRASKSSKHSTS) form a disordered region. The span at 188-206 (VQHHKERKRASKSSKHSTS) shows a compositional bias: basic residues.

Belongs to the sclerostin family. As to quaternary structure, interacts with LRP6.

It localises to the secreted. In terms of biological role, can activate or inhibit Wnt signaling in a context-dependent manner. Activates the canonical Wnt pathway whereby acts through Disheveled proteins and beta-catenin. Antagonises Wnt signaling through the canonical pathways presumably by blocking accessibility of certain WNTs to their receptors. Induces posterior neural markers via components of the canonical Wnt pathway. This Gallus gallus (Chicken) protein is Sclerostin domain-containing protein 1 (SOSTDC1).